Reading from the N-terminus, the 465-residue chain is Indoleacetamide hydrolase (465 aa).

The interval 1 to 40 (MVRGRHRSRDPQRRDLRGRDRRSASRTDARRQSAAERGCR) is disordered. A compositionally biased stretch (basic and acidic residues) spans 9 to 39 (RDPQRRDLRGRDRRSASRTDARRQSAAERGC). Residue serine 149 is the Charge relay system of the active site. Serine 173 functions as the Acyl-ester intermediate in the catalytic mechanism.

This sequence belongs to the amidase family.

Its pathway is plant hormone metabolism; auxin biosynthesis. Hydrolyzes indole-3-acetamide (IAM) into indole-3-acetic acid (IAA). This chain is Indoleacetamide hydrolase (bam), found in Bradyrhizobium japonicum.